We begin with the raw amino-acid sequence, 212 residues long: Thiamine-phosphate synthase (212 aa).

4-amino-2-methyl-5-(diphosphooxymethyl)pyrimidine contacts are provided by residues 40 to 44 and Asn75; that span reads QFREK. Mg(2+)-binding residues include Asp76 and Asp95. Position 113 (Ser113) interacts with 4-amino-2-methyl-5-(diphosphooxymethyl)pyrimidine. 139–141 serves as a coordination point for 2-[(2R,5Z)-2-carboxy-4-methylthiazol-5(2H)-ylidene]ethyl phosphate; sequence TPS. Lys142 is a 4-amino-2-methyl-5-(diphosphooxymethyl)pyrimidine binding site. 2-[(2R,5Z)-2-carboxy-4-methylthiazol-5(2H)-ylidene]ethyl phosphate contacts are provided by residues Gly171 and 191–192; that span reads IS.

The protein belongs to the thiamine-phosphate synthase family. The cofactor is Mg(2+).

It catalyses the reaction 2-[(2R,5Z)-2-carboxy-4-methylthiazol-5(2H)-ylidene]ethyl phosphate + 4-amino-2-methyl-5-(diphosphooxymethyl)pyrimidine + 2 H(+) = thiamine phosphate + CO2 + diphosphate. The enzyme catalyses 2-(2-carboxy-4-methylthiazol-5-yl)ethyl phosphate + 4-amino-2-methyl-5-(diphosphooxymethyl)pyrimidine + 2 H(+) = thiamine phosphate + CO2 + diphosphate. It carries out the reaction 4-methyl-5-(2-phosphooxyethyl)-thiazole + 4-amino-2-methyl-5-(diphosphooxymethyl)pyrimidine + H(+) = thiamine phosphate + diphosphate. The protein operates within cofactor biosynthesis; thiamine diphosphate biosynthesis; thiamine phosphate from 4-amino-2-methyl-5-diphosphomethylpyrimidine and 4-methyl-5-(2-phosphoethyl)-thiazole: step 1/1. In terms of biological role, condenses 4-methyl-5-(beta-hydroxyethyl)thiazole monophosphate (THZ-P) and 2-methyl-4-amino-5-hydroxymethyl pyrimidine pyrophosphate (HMP-PP) to form thiamine monophosphate (TMP). The polypeptide is Thiamine-phosphate synthase (Staphylococcus carnosus (strain TM300)).